The primary structure comprises 172 residues: Large ribosomal subunit protein uL10 (172 aa).

Belongs to the universal ribosomal protein uL10 family. As to quaternary structure, part of the ribosomal stalk of the 50S ribosomal subunit. The N-terminus interacts with L11 and the large rRNA to form the base of the stalk. The C-terminus forms an elongated spine to which L12 dimers bind in a sequential fashion forming a multimeric L10(L12)X complex.

Functionally, forms part of the ribosomal stalk, playing a central role in the interaction of the ribosome with GTP-bound translation factors. This chain is Large ribosomal subunit protein uL10 (rplJ), found in Brucella abortus biovar 1 (strain 9-941).